The sequence spans 100 residues: Urease subunit gamma (100 aa).

It belongs to the urease gamma subunit family. As to quaternary structure, heterotrimer of UreA (gamma), UreB (beta) and UreC (alpha) subunits. Three heterotrimers associate to form the active enzyme.

The protein localises to the cytoplasm. It catalyses the reaction urea + 2 H2O + H(+) = hydrogencarbonate + 2 NH4(+). It functions in the pathway nitrogen metabolism; urea degradation; CO(2) and NH(3) from urea (urease route): step 1/1. In Klebsiella pneumoniae, this protein is Urease subunit gamma.